Reading from the N-terminus, the 497-residue chain is Protein FAM114A2 (497 aa).

A disordered region spans residues 1-54 (MSDKDPPESPVVTGVASTLKDENCEPVEKPEDKSQPVVSTRKRPETKPSSDLEA). A compositionally biased stretch (basic and acidic residues) spans 19–34 (LKDENCEPVEKPEDKS). Residues Ser84 and Ser205 each carry the phosphoserine modification. The interval 344-364 (VAEKEEGEKESEAGNTEEAQK) is disordered.

It belongs to the FAM114 family.

The sequence is that of Protein FAM114A2 (Fam114a2) from Mus musculus (Mouse).